We begin with the raw amino-acid sequence, 741 residues long: Copper-transporting ATPase (741 aa).

The 67-residue stretch at 1–67 (MKESFYIEGM…LIEKLGYSPK (67 aa)) folds into the HMA domain. Topologically, residues 1 to 83 (MKESFYIEGM…KKEFFSPNVK (83 aa)) are cytoplasmic. Cys-12 and Cys-15 together coordinate Cu cation. The helical transmembrane segment at 84-104 (LALAVIFTLFVVYLSMGAMLS) threads the bilayer. Over 105–124 (PSLLPESLLTINNHSNFLNA) the chain is Extracellular. A helical membrane pass occupies residues 125 to 144 (CLQLIGTLIVMHLGRDFYIQ). The Cytoplasmic portion of the chain corresponds to 145–151 (GFKALWH). Residues 152–172 (RQPNMSSLIAIGTSAALISSL) form a helical membrane-spanning segment. The Extracellular segment spans residues 173 to 190 (WQLYFVYTSQWSYGHYYF). Residues 191-211 (ESVCVILMFVMVGKRIENVSK) traverse the membrane as a helical segment. Residues 212–339 (DKALDAMQAL…KAEISRLADK (128 aa)) lie on the Cytoplasmic side of the membrane. A helical membrane pass occupies residues 340–362 (VSSVFVPSVIAIAILAFVVWLII). Residues 363–375 (APKPDFWWNFGIA) lie on the Extracellular side of the membrane. The chain crosses the membrane as a helical span at residues 376–393 (LEVFVSVLVISCPCALGL). The Cytoplasmic segment spans residues 394–681 (ATPMSILVAN…KLSQATIKNI (288 aa)). Residue Asp-431 is the 4-aspartylphosphate intermediate of the active site. Residues Asp-627 and Asp-631 each coordinate Mg(2+). A helical transmembrane segment spans residues 682 to 701 (KENLFWAFCYNSVFIPLACG). At 702-712 (VLYKANIMLSP) the chain is on the extracellular side. The chain crosses the membrane as a helical span at residues 713 to 731 (AIAGLAMSLSSVSVVLNSQ). At 732-741 (RLRNFKIKDH) the chain is on the cytoplasmic side.

Belongs to the cation transport ATPase (P-type) (TC 3.A.3) family. Type IB subfamily.

The protein resides in the cell membrane. The enzyme catalyses Cu(2+)(in) + ATP + H2O = Cu(2+)(out) + ADP + phosphate + H(+). Probably involved in copper export. The polypeptide is Copper-transporting ATPase (copA) (Helicobacter pylori (Campylobacter pylori)).